The primary structure comprises 382 residues: MTEQRPLTIALVAGETSGDILGAGLIRALKERVPNARFVGVAGPRMQAEGCEAWYEIEELAVMGIVEVLGRLRRLLHIHADLTKRFGELKPDVFVGIDAPDFNITLEGNLKKQGIKTIHYVSPSVWAWRQKRVFKIGRATDLVLAFLPFEKAFYDKYNVPCRFIGHTMADAMPLDPDKNAARDVLGIPHDTHCLALLPGSRGAEVEMLSADFLKTAQLLRQTYPDLEIVVPLVNAKRREQFERIKAEVAPDLSVHLLDGMGREAMVASDAALLASGTAALECMLAKCPMVVGYRMKPFTFWLAKLLVKTDYVSLPNLLAGRELVKELLQEECEPQKLAAALLPLLANGKTSHAMHDTFRELHQQIRCNADEQAAQAVLELAQ.

It belongs to the LpxB family.

It carries out the reaction 2-N,3-O-bis[(3R)-3-hydroxytetradecanoyl]-alpha-D-glucosaminyl 1-phosphate + UDP-2-N,3-O-bis[(3R)-3-hydroxytetradecanoyl]-alpha-D-glucosamine = lipid A disaccharide (E. coli) + UDP + H(+). It catalyses the reaction a lipid X + a UDP-2-N,3-O-bis[(3R)-3-hydroxyacyl]-alpha-D-glucosamine = a lipid A disaccharide + UDP + H(+). Its pathway is glycolipid biosynthesis; lipid IV(A) biosynthesis; lipid IV(A) from (3R)-3-hydroxytetradecanoyl-[acyl-carrier-protein] and UDP-N-acetyl-alpha-D-glucosamine: step 5/6. Condensation of UDP-2,3-diacylglucosamine and 2,3-diacylglucosamine-1-phosphate to form lipid A disaccharide, a precursor of lipid A, a phosphorylated glycolipid that anchors the lipopolysaccharide to the outer membrane of the cell. This chain is Lipid-A-disaccharide synthase, found in Shigella dysenteriae serotype 1 (strain Sd197).